Reading from the N-terminus, the 212-residue chain is 3-isopropylmalate dehydratase small subunit (212 aa).

The protein belongs to the LeuD family. LeuD type 1 subfamily. As to quaternary structure, heterodimer of LeuC and LeuD.

It catalyses the reaction (2R,3S)-3-isopropylmalate = (2S)-2-isopropylmalate. Its pathway is amino-acid biosynthesis; L-leucine biosynthesis; L-leucine from 3-methyl-2-oxobutanoate: step 2/4. Functionally, catalyzes the isomerization between 2-isopropylmalate and 3-isopropylmalate, via the formation of 2-isopropylmaleate. This is 3-isopropylmalate dehydratase small subunit from Thiobacillus denitrificans (strain ATCC 25259 / T1).